The sequence spans 372 residues: MNIMEISKFQSLGDKIRTMLEDHGYLSENNDYEPNPIDGNISISYAYPIKAFEKFLGYYDVENRVAYNPSISMRTDFSYCIAACRYNKNGNEDTVILDGVTDEKYLRKAKFALDYFRKEFRIKGSFDFYIRRYRRYTKAKGLSESSAVAAAVSRALIKNVFGEGPALDDVFVSKYARLVSGSGTRAAHSGISIWLSYPGINLRECAAFRVADDPHDVYYGIFPKYTDIATDSAHSVAVKSIFYASWLEDKYANIKRLIEHNFDIDELLISGENDMLKLNAILFSGGLIIQTGESLRILRAIQDFKKNGDLFFTADTGPSIMVLSRDKSLIEELRQSVEDPYIEGTYNFNRHTRDLNNFTKEANEYFLENKIE.

It belongs to the mevalonate 3,5-bisphosphate decarboxylase family. Homodimer.

It catalyses the reaction (R)-3,5-bisphosphomevalonate + H(+) = isopentenyl phosphate + phosphate + CO2. It functions in the pathway isoprenoid biosynthesis; isopentenyl diphosphate biosynthesis via mevalonate pathway. Its function is as follows. Catalyzes the ATP-independent decarboxylation of (R)-mevalonate 3,5-bisphosphate to isopentenyl phosphate. Functions in an alternative mevalonate pathway, only present in extreme acidophiles of the Thermoplasmatales order, which passes through mevalonate 3-phosphate rather than mevalonate 5-phosphate. The sequence is that of Mevalonate 3,5-bisphosphate decarboxylase from Thermoplasma volcanium (strain ATCC 51530 / DSM 4299 / JCM 9571 / NBRC 15438 / GSS1).